The following is a 392-amino-acid chain: uncharacterized protein (392 aa).

A mitochondrion-targeting transit peptide spans 1–34; the sequence is MCISSSSLLCGINSLKYASNRVGILIPPFQTASS. A run of 8 helical transmembrane segments spans residues 115–135, 150–172, 185–205, 208–225, 277–297, 299–319, 321–341, and 350–370; these read VAIM…WHWD, FRFM…WWTL, LLVN…KFGV, ALSV…VALQ, ATFV…AVYA, AAIF…VYPV, AGIF…LNYE, and AHVS…PAMW. The active-site Nucleophile is the Ser292. His351 is an active-site residue.

This sequence belongs to the peptidase S54 family.

Its subcellular location is the mitochondrion inner membrane. This is an uncharacterized protein from Schizosaccharomyces pombe (strain 972 / ATCC 24843) (Fission yeast).